We begin with the raw amino-acid sequence, 152 residues long: MSLVIPEKFQHILRVLNTNIDGRRKIAFAITAIKGVGRRYAHVVLRKADIDLTKRAGELTEDEVERVITIMQNPRQYKIPDWFLNRQKDVKDGKYSQVLANGLDNKLREDLERLKKIRAHRGLRHFWGLRVRGQHTKTTGRRGRTVGVSKKK.

At serine 2 the chain carries N-acetylserine. Residue lysine 91 forms a Glycyl lysine isopeptide (Lys-Gly) (interchain with G-Cter in SUMO2) linkage. 2 positions are modified to N6-acetyllysine; alternate: lysine 94 and lysine 106. Glycyl lysine isopeptide (Lys-Gly) (interchain with G-Cter in SUMO2); alternate cross-links involve residues lysine 94 and lysine 106.

Belongs to the universal ribosomal protein uS13 family. As to quaternary structure, component of the small ribosomal subunit.

The protein resides in the cytoplasm. In terms of biological role, component of the small ribosomal subunit. The ribosome is a large ribonucleoprotein complex responsible for the synthesis of proteins in the cell. The chain is Small ribosomal subunit protein uS13 (RPS18) from Homo sapiens (Human).